Consider the following 74-residue polypeptide: ATP synthase F(1) complex subunit epsilon, mitochondrial (74 aa).

Belongs to the eukaryotic ATPase epsilon family. As to quaternary structure, component of the ATP synthase complex composed at least of ATP5F1A/subunit alpha, ATP5F1B/subunit beta, ATP5MC1/subunit c (homooctomer), MT-ATP6/subunit a, MT-ATP8/subunit 8, ATP5ME/subunit e, ATP5MF/subunit f, ATP5MG/subunit g, ATP5MK/subunit k, ATP5MJ/subunit j, ATP5F1C/subunit gamma, ATP5F1D/subunit delta, ATP5F1E/subunit epsilon, ATP5PF/subunit F6, ATP5PB/subunit b, ATP5PD/subunit d, ATP5PO/subunit OSCP. ATP synthase complex consists of a soluble F(1) head domain (subunits alpha(3) and beta(3)) - the catalytic core - and a membrane F(0) domain - the membrane proton channel (subunits c, a, 8, e, f, g, k and j). These two domains are linked by a central stalk (subunits gamma, delta, and epsilon) rotating inside the F1 region and a stationary peripheral stalk (subunits F6, b, d, and OSCP).

The protein localises to the mitochondrion. It localises to the mitochondrion inner membrane. In terms of biological role, subunit epsilon, of the mitochondrial membrane ATP synthase complex (F(1)F(0) ATP synthase or Complex V) that produces ATP from ADP in the presence of a proton gradient across the membrane which is generated by electron transport complexes of the respiratory chain. ATP synthase complex consist of a soluble F(1) head domain - the catalytic core - and a membrane F(1) domain - the membrane proton channel. These two domains are linked by a central stalk rotating inside the F(1) region and a stationary peripheral stalk. During catalysis, ATP synthesis in the catalytic domain of F(1) is coupled via a rotary mechanism of the central stalk subunits to proton translocation. In vivo, can only synthesize ATP although its ATP hydrolase activity can be activated artificially in vitro. May be essential for the assembly of F(1) and may play an important role in the incorporation of the hydrophobic subunit c into the F(1)-c oligomer rotor of the mitochondrial ATP synthase complex. This Dictyostelium discoideum (Social amoeba) protein is ATP synthase F(1) complex subunit epsilon, mitochondrial.